We begin with the raw amino-acid sequence, 530 residues long: Cytochrome P450 2U1 (530 aa).

The next 4 helical transmembrane spans lie at 21 to 41 (LQAV…DWVW), 99 to 119 (VYGN…LSDF), 247 to 267 (ICLH…YLPF), and 328 to 348 (LFYI…NSLL). A heme-binding site is contributed by cysteine 476. Residues 481–501 (LAKMELFLMFVSLMQSFTFAL) form a helical membrane-spanning segment.

This sequence belongs to the cytochrome P450 family. Heme serves as cofactor. Specifically expressed in thymus and brain. In brain, expressed in cortex, cerebellum, olfactory bulbs, pons and medulla and the limbic structures (at protein level).

It is found in the endoplasmic reticulum membrane. The protein localises to the microsome membrane. The protein resides in the mitochondrion inner membrane. The enzyme catalyses an omega-methyl-long-chain fatty acid + reduced [NADPH--hemoprotein reductase] + O2 = an omega-hydroxy-long-chain fatty acid + oxidized [NADPH--hemoprotein reductase] + H2O + H(+). The catalysed reaction is (5Z,8Z,11Z,14Z)-eicosatetraenoate + reduced [NADPH--hemoprotein reductase] + O2 = 19-hydroxy-(5Z,8Z,11Z,14Z)-eicosatetraenoate + oxidized [NADPH--hemoprotein reductase] + H2O + H(+). It catalyses the reaction (5Z,8Z,11Z,14Z)-eicosatetraenoate + reduced [NADPH--hemoprotein reductase] + O2 = 20-hydroxy-(5Z,8Z,11Z,14Z)-eicosatetraenoate + oxidized [NADPH--hemoprotein reductase] + H2O + H(+). It carries out the reaction N-[(5Z,8Z,11Z,14Z)-eicosatetraenoyl]-serotonin + reduced [NADPH--hemoprotein reductase] + O2 = 2-oxo-N-[(5Z,8Z,11Z,14Z)-eicosatetraenoyl]-serotonin + oxidized [NADPH--hemoprotein reductase] + H2O + H(+). In terms of biological role, a cytochrome P450 monooxygenase involved in the metabolism of arachidonic acid and its conjugates. Mechanistically, uses molecular oxygen inserting one oxygen atom into a substrate, and reducing the second into a water molecule, with two electrons provided by NADPH via cytochrome P450 reductase (CPR; NADPH-ferrihemoprotein reductase). Acts as an omega and omega-1 hydroxylase for arachidonic acid and possibly for other long chain fatty acids. May modulate the arachidonic acid signaling pathway and play a role in other fatty acid signaling processes. May down-regulate the biological activities of N-arachidonoyl-serotonin, an endocannabinoid that has anti-nociceptive effects through inhibition of fatty acid amide hydrolase FAAH, TRPV1 receptor and T-type calcium channels. Catalyzes C-2 oxidation of the indole ring of N-arachidonoyl-serotonin forming a less active product 2-oxo-N-arachidonoyl-serotonin. In Rattus norvegicus (Rat), this protein is Cytochrome P450 2U1 (Cyp2u1).